A 535-amino-acid chain; its full sequence is Methylmalonate-semialdehyde/malonate-semialdehyde dehydrogenase [acylating], mitochondrial (535 aa).

The transit peptide at Met-1 to Phe-33 directs the protein to the mitochondrion. N6-acetyllysine; alternate occurs at positions 47, 52, 55, and 76. Lys-47, Lys-52, Lys-55, and Lys-76 each carry N6-succinyllysine; alternate. Lys-87 is modified (N6-acetyllysine). An N6-acetyllysine; alternate mark is found at Lys-117 and Lys-129. 2 positions are modified to N6-succinyllysine; alternate: Lys-117 and Lys-129. Positions 183, 185, 209, 212, 213, and 262 each coordinate NAD(+). A Phosphoserine modification is found at Ser-262. Residue Lys-298 is modified to N6-acetyllysine. Cys-317 serves as the catalytic Nucleophile. 2 positions are modified to N6-acetyllysine: Lys-330 and Lys-331. 2 positions are modified to N6-acetyllysine; alternate: Lys-364 and Lys-376. N6-succinyllysine; alternate is present on residues Lys-364 and Lys-376. Ser-380 carries the phosphoserine modification. Lys-391 carries the post-translational modification N6-succinyllysine. NAD(+) is bound at residue Glu-417. At Lys-500 the chain carries N6-acetyllysine. Lys-517 carries the N6-succinyllysine modification.

The protein belongs to the aldehyde dehydrogenase family. As to quaternary structure, homotetramer.

It is found in the mitochondrion. It carries out the reaction 3-oxopropanoate + NAD(+) + CoA + H2O = hydrogencarbonate + acetyl-CoA + NADH + H(+). It catalyses the reaction 2-methyl-3-oxopropanoate + NAD(+) + CoA + H2O = propanoyl-CoA + hydrogencarbonate + NADH + H(+). The catalysed reaction is (R)-2-methyl-3-oxopropanoate + NAD(+) + CoA + H2O = propanoyl-CoA + hydrogencarbonate + NADH + H(+). The enzyme catalyses (S)-2-methyl-3-oxopropanoate + NAD(+) + CoA + H2O = propanoyl-CoA + hydrogencarbonate + NADH + H(+). Its function is as follows. Malonate and methylmalonate semialdehyde dehydrogenase involved in the catabolism of valine, thymine, and compounds catabolized by way of beta-alanine, including uracil and cytidine. This chain is Methylmalonate-semialdehyde/malonate-semialdehyde dehydrogenase [acylating], mitochondrial, found in Homo sapiens (Human).